A 152-amino-acid chain; its full sequence is Ribosome maturation factor RimP (152 aa).

It belongs to the RimP family.

It is found in the cytoplasm. Its function is as follows. Required for maturation of 30S ribosomal subunits. This Erwinia tasmaniensis (strain DSM 17950 / CFBP 7177 / CIP 109463 / NCPPB 4357 / Et1/99) protein is Ribosome maturation factor RimP.